The chain runs to 177 residues: Translation initiation factor IF-3 (177 aa).

It belongs to the IF-3 family. Monomer.

It is found in the cytoplasm. In terms of biological role, IF-3 binds to the 30S ribosomal subunit and shifts the equilibrium between 70S ribosomes and their 50S and 30S subunits in favor of the free subunits, thus enhancing the availability of 30S subunits on which protein synthesis initiation begins. In Acaryochloris marina (strain MBIC 11017), this protein is Translation initiation factor IF-3.